Consider the following 350-residue polypeptide: tRNA-splicing endonuclease (350 aa).

Residues Tyr-286, His-297, and Lys-328 contribute to the active site.

It belongs to the tRNA-intron endonuclease family. Archaeal long subfamily. In terms of assembly, homodimer.

The catalysed reaction is pretRNA = a 3'-half-tRNA molecule with a 5'-OH end + a 5'-half-tRNA molecule with a 2',3'-cyclic phosphate end + an intron with a 2',3'-cyclic phosphate and a 5'-hydroxyl terminus.. Functionally, endonuclease that removes tRNA introns. Cleaves pre-tRNA at the 5'- and 3'-splice sites to release the intron. The products are an intron and two tRNA half-molecules bearing 2',3' cyclic phosphate and 5'-OH termini. Recognizes a pseudosymmetric substrate in which 2 bulged loops of 3 bases are separated by a stem of 4 bp. This chain is tRNA-splicing endonuclease, found in Methanosarcina barkeri (strain Fusaro / DSM 804).